We begin with the raw amino-acid sequence, 162 residues long: Caveolin-2 (162 aa).

The Cytoplasmic segment spans residues 1–86 (MGLESEKADV…FEISKYVLYK (86 aa)). At Y19 the chain carries Phosphotyrosine. S20, S23, and S36 each carry phosphoserine. An intramembrane region (helical) is located at residues 87–107 (FLTFFLAIPLAFAAGILFAIL). Over 108–162 (SCLHIWIIMPFVKTCLMVLPSVQTIWKSVTDVVIAPLCTSVGRSFSSVSLQLSQD) the chain is Cytoplasmic.

The protein belongs to the caveolin family. As to quaternary structure, monomer or homodimer. Interacts with CAV1; the interaction forms a stable heterooligomeric complex that is required for targeting to lipid rafts and for caveolae formation. Tyrosine phosphorylated forms do not form heterooligomers with the Tyr-19-phosphorylated form existing as a monomer or dimer. Interacts (tyrosine phosphorylated form) with the SH2 domain-containing proteins, RASA1, NCK1 and SRC. Interacts (tyrosine phosphorylated form) with INSR. Interacts (Tyr-19 phosphorylated form) with MAPK1 (phosphorylated form); the interaction, promoted by insulin, leads to nuclear location and MAPK1 activation. Interacts with STAT3; the interaction is increased on insulin-induced tyrosine phosphorylation leading to STAT activation. Post-translationally, phosphorylated on serine and tyrosine residues. CAV1 promotes phosphorylation on Ser-23 which then targets the complex to the plasma membrane, lipid rafts and caveolae. Phosphorylation on Ser-36 appears to modulate mitosis in endothelial cells. Phosphorylation on Tyr-19 is required for insulin-induced phosphorylation of MAPK1 and DNA binding of STAT3. Tyrosine phosphorylation is induced by both EGF and insulin.

It localises to the nucleus. Its subcellular location is the golgi apparatus membrane. It is found in the cell membrane. The protein localises to the membrane. The protein resides in the caveola. Functionally, may act as a scaffolding protein within caveolar membranes. Interacts directly with G-protein alpha subunits and can functionally regulate their activity. Acts as an accessory protein in conjunction with CAV1 in targeting to lipid rafts and driving caveolae formation. The Ser-36 phosphorylated form has a role in modulating mitosis in endothelial cells. Positive regulator of cellular mitogenesis of the MAPK signaling pathway. Required for the insulin-stimulated nuclear translocation and activation of MAPK1 and STAT3, and the subsequent regulation of cell cycle progression. In Echinops telfairi (Lesser hedgehog tenrec), this protein is Caveolin-2 (CAV2).